Consider the following 390-residue polypeptide: Argininosuccinate synthase (390 aa).

6 to 14 (SYSGGLDTT) provides a ligand contact to ATP. Residue tyrosine 83 coordinates L-citrulline. ATP is bound at residue glycine 113. L-aspartate contacts are provided by threonine 115, asparagine 119, and aspartate 120. Asparagine 119 lines the L-citrulline pocket. L-citrulline is bound by residues arginine 123, serine 169, serine 178, glutamate 254, and tyrosine 266.

It belongs to the argininosuccinate synthase family. Type 1 subfamily. As to quaternary structure, homotetramer.

It is found in the cytoplasm. The enzyme catalyses L-citrulline + L-aspartate + ATP = 2-(N(omega)-L-arginino)succinate + AMP + diphosphate + H(+). Its pathway is amino-acid biosynthesis; L-arginine biosynthesis; L-arginine from L-ornithine and carbamoyl phosphate: step 2/3. The polypeptide is Argininosuccinate synthase (Archaeoglobus fulgidus (strain ATCC 49558 / DSM 4304 / JCM 9628 / NBRC 100126 / VC-16)).